We begin with the raw amino-acid sequence, 747 residues long: MDVSEVSGVPPWFADHLREEGIESLYPPQAAAVDAGVADGESLVASVPTASGKTLVAQLAMLSAIDRGGTALYIVPLRALASEKREEFAAFEEYGLSVGVTTGSYEDTGEWLADKDIIVATSEKVDSLVRNGAPWIDDLDCVVADEVHLVDDEHRGPTLEVTLAKLRRVNPNLQVVALSATVGNAGEMAEWLDAELVDSSWRPIELRKGVHYGQALHFGDGTQQELPVQRTEKPTEAVVRETLDEGGSTLVFVNSRRNAEGAAKRLAKTTVDGLDADERAALSSLAEEIRAVSDTETSDDLADCVEQGAAFHHAGCSSEHRSLVEDAFRDRLIKTICATPTLAAGVNTPARRVVVRDWRRYSGDAGGMQPLSVLEVHQMMGRAGRPGRDPYGEAVLLADSHDELDELLDRYVWADPEPVESKLAREPSMRTHLLATVASGFADSRSALLSFLDRTLYATQYRHGDGEDNLERVVDTTLSYLETNGFIDRDGDAIEATDLGHTVSRLYLDPMSAAEIIDGLADAASPTAMGLYQLVARTPDMYELYLRSGDREEYTMLAYEREAELLGELPSEFEEGRFEDWLSALKTARMLEDWASELDEDDIAERYGVGPGDIRGKVDTAEWLLGAAESLASEQDLADVSAIREARKRVEHGVGEELIDLAGVRGVGRKRARRLYDAGIETRADLRNADKSVVLAALRGREQTAENVLEAAGHQQPEMDGVTPDADVKESAAAAGTDDGQANLGDF.

Residues Gln29 and 47–54 each bind ATP; that span reads VPTASGKT. The 167-residue stretch at 34–200 folds into the Helicase ATP-binding domain; sequence DAGVADGESL…WLDAELVDSS (167 aa). Residues 145–148 carry the DEAH box motif; the sequence is DEVH. Residues 234-434 enclose the Helicase C-terminal domain; it reads PTEAVVRETL…REPSMRTHLL (201 aa). The tract at residues 711 to 747 is disordered; sequence AAGHQQPEMDGVTPDADVKESAAAAGTDDGQANLGDF.

The protein belongs to the helicase family. Hel308 subfamily. Monomer.

The catalysed reaction is Couples ATP hydrolysis with the unwinding of duplex DNA by translocating in the 3'-5' direction.. The enzyme catalyses ATP + H2O = ADP + phosphate + H(+). DNA-dependent ATPase and 3'-5' DNA helicase that may be involved in repair of stalled replication forks. The protein is ATP-dependent DNA helicase Hel308 of Natronomonas pharaonis (strain ATCC 35678 / DSM 2160 / CIP 103997 / JCM 8858 / NBRC 14720 / NCIMB 2260 / Gabara) (Halobacterium pharaonis).